We begin with the raw amino-acid sequence, 318 residues long: Peptidyl-prolyl cis-trans isomerase CPR4 (318 aa).

The N-terminal stretch at 1-20 (MWLKSLLLCLYSLVLCQVHA) is a signal peptide. The region spanning 55 to 225 (YFDPVSKSMK…HELRFLYFVL (171 aa)) is the PPIase cyclophilin-type domain. An N-linked (GlcNAc...) asparagine glycan is attached at N166. The chain crosses the membrane as a helical span at residues 286–303 (ISRALMCLTVLGLCFIAY).

The protein localises to the membrane. It catalyses the reaction [protein]-peptidylproline (omega=180) = [protein]-peptidylproline (omega=0). PPIases accelerate the folding of proteins. It catalyzes the cis-trans isomerization of proline imidic peptide bonds in oligopeptides. In Saccharomyces cerevisiae (strain ATCC 204508 / S288c) (Baker's yeast), this protein is Peptidyl-prolyl cis-trans isomerase CPR4 (CPR4).